Here is a 201-residue protein sequence, read N- to C-terminus: MSRYRGPRFKKIRRLGALPGLTSKRPRSGSDLRNQSRSGKKSQYRIRLEEKQKLRFHYGLTERQLLRYVRIAGKAKGSTGQVLLQLLEMRLDNILFRLGMASTIPGARQLVNHRHILVNGRIVDIPSYRCKPRDIITTRDEQRSRALIQNYLDSPSHEELPKHLTFHPSQYKGLVNQIIDSKWVGLKINELLVVEYYSRQT.

Positions 15–44 (LGALPGLTSKRPRSGSDLRNQSRSGKKSQY) are disordered. Positions 89–150 (MRLDNILFRL…EQRSRALIQN (62 aa)) constitute an S4 RNA-binding domain.

Belongs to the universal ribosomal protein uS4 family. In terms of assembly, part of the 30S ribosomal subunit. Contacts protein S5. The interaction surface between S4 and S5 is involved in control of translational fidelity.

The protein localises to the plastid. It localises to the chloroplast. Its function is as follows. One of the primary rRNA binding proteins, it binds directly to 16S rRNA where it nucleates assembly of the body of the 30S subunit. Functionally, with S5 and S12 plays an important role in translational accuracy. In Calycanthus floridus var. glaucus (Eastern sweetshrub), this protein is Small ribosomal subunit protein uS4c (rps4).